The chain runs to 702 residues: Autophagy-related protein 9 (702 aa).

Residues 1 to 205 (MFYQPAQNKK…GKGLSCIIVH (205 aa)) lie on the Cytoplasmic side of the membrane. The tract at residues 35–128 (QESLDSDEDE…SKQKPALPNF (94 aa)) is disordered. Residues 38 to 47 (LDSDEDESSP) show a composition bias toward acidic residues. A compositionally biased stretch (low complexity) spans 94–107 (SSKVPSKHPSPSFP). Residues 108-120 (ETTSLRNLQNGSK) are compositionally biased toward polar residues. A helical membrane pass occupies residues 206 to 223 (RLFQILTVSFVIGFTTFI). Over 224–251 (TSCIDWPAVTPHGSLAGVTKSQCIAQMS) the chain is Lumenal. A helical membrane pass occupies residues 252 to 270 (PITYLVLWLFLSFLLALWI). Residues 271-421 (YYLTDIPRLW…RRRFIVAGFL (151 aa)) are Cytoplasmic-facing. An intramembrane segment occupies 422–446 (NCLFAPIVAIYLVIHNFFRYFNEYH). The Cytoplasmic portion of the chain corresponds to 447 to 496 (KNPGALSTRRYTPLALWTFREYNELQHFFDERINDSYAAASHYVSQFPDF). Residues 497 to 522 (NMIRLFKYISFILGSFTAILVIITVF) traverse the membrane as a helical segment. The Lumenal segment spans residues 523-537 (DPELMVTFEITKDRS). The chain crosses the membrane as a helical span at residues 538–555 (VLFYLGLFGSLIAVSRSI). Topologically, residues 556–603 (IPDETLVFAPEKALRRVITFTHYMPGWWSDNMHSKAVQQEFCSLYSYR) are cytoplasmic. An intramembrane segment occupies 604-624 (IVNLLWEILGILLTPVLLFFT). The Cytoplasmic portion of the chain corresponds to 625 to 702 (FPSCSQDIVD…NTEAPRRDLR (78 aa)).

The protein belongs to the ATG9 family. As to quaternary structure, homotrimer; forms a homotrimer with a central pore that forms a path between the two membrane leaflets. Interacts with ctl1. Phosphorylated by atg1. Atg1 phosphorylation is required for preautophagosome elongation.

Its subcellular location is the preautophagosomal structure membrane. It is found in the cytoplasmic vesicle membrane. The protein resides in the golgi apparatus membrane. It localises to the endoplasmic reticulum membrane. The enzyme catalyses a 1,2-diacyl-sn-glycero-3-phosphocholine(in) = a 1,2-diacyl-sn-glycero-3-phosphocholine(out). It catalyses the reaction a 1,2-diacyl-sn-glycero-3-phospho-L-serine(in) = a 1,2-diacyl-sn-glycero-3-phospho-L-serine(out). The catalysed reaction is a 1,2-diacyl-sn-glycero-3-phosphoethanolamine(in) = a 1,2-diacyl-sn-glycero-3-phosphoethanolamine(out). It carries out the reaction a 1,2-diacyl-sn-glycero-3-phospho-(1D-myo-inositol-3-phosphate)(in) = a 1,2-diacyl-sn-glycero-3-phospho-(1D-myo-inositol-3-phosphate)(out). Its function is as follows. Phospholipid scramblase involved in autophagy and cytoplasm to vacuole transport (Cvt) vesicle formation. Cycles between the preautophagosomal structure/phagophore assembly site (PAS) and the cytoplasmic vesicle pool and supplies membrane for the growing autophagosome. Lipid scramblase activity plays a key role in preautophagosomal structure/phagophore assembly by distributing the phospholipids that arrive through atg2 from the cytoplasmic to the luminal leaflet of the bilayer, thereby driving autophagosomal membrane expansion. Also involved in endoplasmic reticulum-specific autophagic process and is essential for the survival of cells subjected to severe ER stress. Different machineries are required for anterograde trafficking to the PAS during either the Cvt pathway or bulk autophagy and for retrograde trafficking. Has a role in meiosis and sporulation. In Schizosaccharomyces pombe (strain 972 / ATCC 24843) (Fission yeast), this protein is Autophagy-related protein 9.